A 233-amino-acid chain; its full sequence is Large ribosomal subunit protein uL2 (233 aa).

The tract at residues 195 to 233 (PHGGGNHQHVGRPSTVGRNAPPGRKVGRLSPKRRRVNGR) is disordered. A compositionally biased stretch (basic residues) spans 219 to 233 (KVGRLSPKRRRVNGR).

This sequence belongs to the universal ribosomal protein uL2 family. As to quaternary structure, part of the 50S ribosomal subunit. Forms a bridge to the 30S subunit in the 70S ribosome.

In terms of biological role, one of the primary rRNA binding proteins. Required for association of the 30S and 50S subunits to form the 70S ribosome, for tRNA binding and peptide bond formation. It has been suggested to have peptidyltransferase activity; this is somewhat controversial. Makes several contacts with the 16S rRNA in the 70S ribosome. The protein is Large ribosomal subunit protein uL2 of Thermoplasma acidophilum (strain ATCC 25905 / DSM 1728 / JCM 9062 / NBRC 15155 / AMRC-C165).